Reading from the N-terminus, the 194-residue chain is Recombination protein RecR (194 aa).

A C4-type zinc finger spans residues 55–70 (CRECGNLAEGELCPIC). Residues 78–171 (SLLAVVESVA…RVTRPAYGLP (94 aa)) form the Toprim domain.

It belongs to the RecR family.

Functionally, may play a role in DNA repair. It seems to be involved in an RecBC-independent recombinational process of DNA repair. It may act with RecF and RecO. The polypeptide is Recombination protein RecR (Thermus thermophilus (strain ATCC 27634 / DSM 579 / HB8)).